The following is a 289-amino-acid chain: tRNA dimethylallyltransferase (289 aa).

9–16 (GTTASGKT) contacts ATP. 11–16 (TASGKT) lines the substrate pocket. Residues 34-37 (DSLC) are interaction with substrate tRNA.

The protein belongs to the IPP transferase family. As to quaternary structure, monomer. Mg(2+) serves as cofactor.

It carries out the reaction adenosine(37) in tRNA + dimethylallyl diphosphate = N(6)-dimethylallyladenosine(37) in tRNA + diphosphate. Its function is as follows. Catalyzes the transfer of a dimethylallyl group onto the adenine at position 37 in tRNAs that read codons beginning with uridine, leading to the formation of N6-(dimethylallyl)adenosine (i(6)A). The sequence is that of tRNA dimethylallyltransferase from Campylobacter jejuni subsp. doylei (strain ATCC BAA-1458 / RM4099 / 269.97).